The following is a 459-amino-acid chain: MENEKKLFKKLYSWKEISKHNTIENGIWISIDGLVYDITKFIKHHPGGEQVLILAAGRDVTNLFESYHPMTDLPSKMLKQYEIGQVSTMEFPKYVEKSKFYSTLKERVREHFKKSNKDPKFAFGIIARLIFVYWFLITSYYVSHYAFIENFYLNCLLAIVYSLSNSLFSLHMMHDACHSAISHNPKVWKWLGATYDLFIGASFFYWCNQHVIGHHVYTNIRNADPDIGDSEVDFRIVTPYQNKYWIYKYQHIYAPFLYGLYSIKYRLCDYSVFTEGSIGRVRTANASNFEIISFIIGKLVFIVFRFIIPLQYHSLVNLLTYFFIAEFFFGLYLSFGFQVSHSADNLKIVATSVNENDEPTNVDEDWAIHQIKTTQDYGINSYMCLFFSGGVNLQVVHHLFPSISQEYYGELVPIIKKVCDEYDVHYNIQPTFYAAFKSHIDFLYNMGNNENYVRKSVTD.

The Cytochrome b5 heme-binding domain occupies 9 to 87 (KKLYSWKEIS…LKQYEIGQVS (79 aa)). 2 residues coordinate heme: His-45 and His-68. 2 helical membrane passes run 121-141 (FAFG…TSYY) and 151-171 (FYLN…FSLH). Residues 174–178 (HDACH) carry the Histidine box-1 motif. Residues 187–207 (VWKWLGATYDLFIGASFFYWC) traverse the membrane as a helical segment. The Histidine box-2 signature appears at 210-215 (HVIGHH). Transmembrane regions (helical) follow at residues 289–309 (FEII…FIIP) and 315–335 (LVNL…YLSF). The Histidine box-3 signature appears at 394 to 398 (QVVHH).

Belongs to the fatty acid desaturase type 1 family. Requires Fe cation as cofactor.

It is found in the membrane. The polypeptide is Probable Delta(5) fatty acid desaturase C (Dictyostelium discoideum (Social amoeba)).